Reading from the N-terminus, the 196-residue chain is MFRLDLLSDPLEQFKLWYDEAIRHETLHPDAMVLATADSKGKPSARNVLYKGISKGGFLIFTNYHSRKAHELDENPQAAWVFYWPKTYKQVRGEGRVERLTQEESEAYFETRSYESQIAAWVSEQSQEIPDREYLITRYKKYREKFQDDVRCPEFWGGFRLIPDRMEFWVGQEHRLHDRFCYLKENQEWKIIRLAP.

Residues 46 to 51 (RNVLYK), 61 to 62 (FT), Arg67, Lys68, and Gln90 contribute to the FMN site. Lys51 lines the substrate pocket. Tyr108, Arg112, and Ser116 together coordinate substrate. FMN contacts are provided by residues 125-126 (QS) and Trp169. 175–177 (RLH) serves as a coordination point for substrate. Arg179 contributes to the FMN binding site.

Belongs to the pyridoxamine 5'-phosphate oxidase family. As to quaternary structure, homodimer. It depends on FMN as a cofactor.

It carries out the reaction pyridoxamine 5'-phosphate + O2 + H2O = pyridoxal 5'-phosphate + H2O2 + NH4(+). The enzyme catalyses pyridoxine 5'-phosphate + O2 = pyridoxal 5'-phosphate + H2O2. It functions in the pathway cofactor metabolism; pyridoxal 5'-phosphate salvage; pyridoxal 5'-phosphate from pyridoxamine 5'-phosphate: step 1/1. Its pathway is cofactor metabolism; pyridoxal 5'-phosphate salvage; pyridoxal 5'-phosphate from pyridoxine 5'-phosphate: step 1/1. In terms of biological role, catalyzes the oxidation of either pyridoxine 5'-phosphate (PNP) or pyridoxamine 5'-phosphate (PMP) into pyridoxal 5'-phosphate (PLP). In Coxiella burnetii (strain RSA 493 / Nine Mile phase I), this protein is Pyridoxine/pyridoxamine 5'-phosphate oxidase.